The primary structure comprises 598 residues: Protein VASCULAR ASSOCIATED DEATH 1, chloroplastic (598 aa).

A compositionally biased stretch (polar residues) spans 1-11; it reads MAMLSTASVSG. Positions 1–64 are disordered; the sequence is MAMLSTASVS…PSRGGDNQSE (64 aa). Residues 1-68 constitute a chloroplast transit peptide; sequence MAMLSTASVS…GDNQSEVISK (68 aa). The N-linked (GlcNAc...) asparagine glycan is linked to asparagine 61. One can recognise a GRAM domain in the interval 70–134; sequence EEYRQLFRLP…PFAEISCVKR (65 aa). The VASt domain maps to 272–444; the sequence is DFTKVAEAKF…MAHELLKQKK (173 aa). 2 N-linked (GlcNAc...) asparagine glycosylation sites follow: asparagine 329 and asparagine 494. Residues 507-527 traverse the membrane as a helical segment; the sequence is QVIVLAFAVILLMQVTIVVLL. A coiled-coil region spans residues 553–595; it reads WLEKRMHFLREEMMMVEDRLQRMRQDHAALKAQFHHLERLLRR.

The protein localises to the membrane. It localises to the plastid. It is found in the chloroplast. In terms of biological role, involved in ethylene- and salicylic acid-dependent cell death control associated with cells in the vicinity of vascular bundles. The sequence is that of Protein VASCULAR ASSOCIATED DEATH 1, chloroplastic from Arabidopsis thaliana (Mouse-ear cress).